Here is a 728-residue protein sequence, read N- to C-terminus: 1,4-alpha-glucan branching enzyme GlgB (728 aa).

Residue Asp405 is the Nucleophile of the active site. The active-site Proton donor is Glu458.

This sequence belongs to the glycosyl hydrolase 13 family. GlgB subfamily. As to quaternary structure, monomer.

The enzyme catalyses Transfers a segment of a (1-&gt;4)-alpha-D-glucan chain to a primary hydroxy group in a similar glucan chain.. Its pathway is glycan biosynthesis; glycogen biosynthesis. Catalyzes the formation of the alpha-1,6-glucosidic linkages in glycogen by scission of a 1,4-alpha-linked oligosaccharide from growing alpha-1,4-glucan chains and the subsequent attachment of the oligosaccharide to the alpha-1,6 position. In Salmonella arizonae (strain ATCC BAA-731 / CDC346-86 / RSK2980), this protein is 1,4-alpha-glucan branching enzyme GlgB.